A 274-amino-acid chain; its full sequence is Ribosomal RNA small subunit methyltransferase A (274 aa).

S-adenosyl-L-methionine-binding residues include N26, L28, G53, E74, D94, and N114.

This sequence belongs to the class I-like SAM-binding methyltransferase superfamily. rRNA adenine N(6)-methyltransferase family. RsmA subfamily.

It is found in the cytoplasm. It catalyses the reaction adenosine(1518)/adenosine(1519) in 16S rRNA + 4 S-adenosyl-L-methionine = N(6)-dimethyladenosine(1518)/N(6)-dimethyladenosine(1519) in 16S rRNA + 4 S-adenosyl-L-homocysteine + 4 H(+). Its function is as follows. Specifically dimethylates two adjacent adenosines (A1518 and A1519) in the loop of a conserved hairpin near the 3'-end of 16S rRNA in the 30S particle. May play a critical role in biogenesis of 30S subunits. The protein is Ribosomal RNA small subunit methyltransferase A of Bdellovibrio bacteriovorus (strain ATCC 15356 / DSM 50701 / NCIMB 9529 / HD100).